The chain runs to 156 residues: Bursicon (156 aa).

An N-terminal signal peptide occupies residues 1–26; the sequence is MYALDFLFIAFVYFAACHIQEKPVRA. 5 disulfides stabilise this stretch: C37–C86, C51–C100, C61–C121, C65–C123, and C83–C126. Positions 37–127 constitute a CTCK domain; that stretch reads CQMTPVIHIL…PLECMCRPCG (91 aa).

As to quaternary structure, heterodimer of burs and pburs.

The protein resides in the secreted. In terms of biological role, final heterodimeric neurohormone released at the end of the molting cycle, involved in the sclerotization (tanning) of the insect cuticle, melanization and wing spreading. In Manduca sexta (Tobacco hawkmoth), this protein is Bursicon.